The sequence spans 85 residues: Insect toxin 2-53 (85 aa).

The N-terminal stretch at 1-21 (MKLLLLLIVSASMLIESLVNA) is a signal peptide. In terms of domain architecture, LCN-type CS-alpha/beta spans 22–82 (DGYIKRRDGC…TWKSETNTCG (61 aa)). Intrachain disulfides connect cysteine 31–cysteine 81, cysteine 35–cysteine 56, cysteine 42–cysteine 63, and cysteine 46–cysteine 65. Glycine 82 carries the glycine amide modification.

It belongs to the long (4 C-C) scorpion toxin superfamily. Sodium channel inhibitor family. Beta subfamily. Expressed by the venom gland.

The protein resides in the secreted. Its function is as follows. Depressant insect toxins cause a transient contraction paralysis followed by a slow flaccid paralysis. They bind voltage-independently to sodium channels (Nav) and block action potentials, primarily by depolarizing the axonal membrane and suppressing the sodium current. This is Insect toxin 2-53 from Leiurus hebraeus (Hebrew deathstalker scorpion).